Consider the following 1076-residue polypeptide: Histone deacetylase 4 (1076 aa).

The stretch at 66-169 (REQQLQQELL…GKESAVASTE (104 aa)) forms a coiled coil. An interaction with MEF2A region spans residues 117–312 (MLAMKHQQEL…NSSSGNVSTE (196 aa)). Over residues 132 to 162 (KLERHRQEQELEKQHREQKLQQLKNKEKGKE) the composition is skewed to basic and acidic residues. Disordered stretches follow at residues 132-166 (KLER…SAVA), 205-225 (TQHS…ASYN), and 239-323 (PLRK…PSAP). Polar residues predominate over residues 205 to 224 (TQHSSLDQSSPPQSGVSASY). Position 209 is a phosphoserine (Ser-209). Ser-245 bears the Phosphoserine; by CaMK4 and SIK1 mark. The segment covering 258–273 (KVAERRSSPLLRRKDG) has biased composition (basic and acidic residues). The span at 289–310 (SACSSAPGSGPSSPNSSSGNVS) shows a compositional bias: low complexity. The PxLPxI/L motif; mediates interaction with ANKRA2 and 14-3-3 proteins signature appears at 348–353 (PSLPNI). Ser-349 carries the post-translational modification Phosphoserine. Ser-465 carries the phosphoserine; by CaMK4 and SIK1 modification. Disordered stretches follow at residues 506–529 (ISKP…ELRE), 541–580 (RLPG…QRPA), and 622–645 (RPLS…EPPT). The segment covering 514-529 (RQPESHPEETEEELRE) has biased composition (basic and acidic residues). Residue Lys-556 forms a Glycyl lysine isopeptide (Lys-Gly) (interchain with G-Cter in SUMO) linkage. Ser-562 is subject to Phosphoserine. Polar residues predominate over residues 626–638 (RAQSSPASATFPM). A Phosphoserine; by CaMK4 modification is found at Ser-629. Ser-630 carries the post-translational modification Phosphoserine. Residues 652–1076 (GLVYDTLMLK…EEPMEEEPPL (425 aa)) form a histone deacetylase region. Zn(2+) contacts are provided by Cys-664, Cys-666, His-672, and Cys-743. His-795 is an active-site residue. The Nuclear export signal motif lies at 1043–1076 (EEAETVTAMASLSVGVKPAEKRSEEEPMEEEPPL).

This sequence belongs to the histone deacetylase family. HD type 2 subfamily. In terms of assembly, homodimer. Homodimerization via its N-terminal domain. Interacts with HDAC7. Interacts with MEF2A, MEF2C, MEF2D, MORC2 and NR2C1. Interacts with a 14-3-3 chaperone proteins in a phosphorylation dependent manner. Interacts with 14-3-3 protein YWHAB. Interacts with BTBD14B. Interacts with KDM5B. Interacts (via PxLPxI/L motif) with ANKRA2 (via ankyrin repeats). Interacts with CUL7 (as part of the 3M complex); negatively regulated by ANKRA2. Interacts with EP300 in the presence of TFAP2C. Interacts with AHRR. Interacts with MYOCD. Interacts with HSPA1A and HSPA1B leading to their deacetylation at 'Lys-77'. Interacts with ZBTB7B; the interaction allows the recruitment of HDAC4 on CD8 loci for deacetylation and possible inhibition of CD8 genes expression. Interacts with DHX36. Interacts with SIK3; this interaction leads to HDAC4 retention in the cytoplasm. Interacts with ZNF638. In terms of processing, phosphorylated by CaMK4 at Ser-245, Ser-465 and Ser-629. Phosphorylation at other residues by CaMK2D is required for the interaction with 14-3-3. Phosphorylation at Ser-349, within the PxLPxI/L motif, impairs the binding of ANKRA2 but generates a high-affinity docking site for 14-3-3. Post-translationally, sumoylation on Lys-556 is promoted by the E3 SUMO-protein ligase RANBP2, and prevented by phosphorylation by CaMK4.

It is found in the nucleus. The protein localises to the cytoplasm. The enzyme catalyses N(6)-acetyl-L-lysyl-[histone] + H2O = L-lysyl-[histone] + acetate. Functionally, responsible for the deacetylation of lysine residues on the N-terminal part of the core histones (H2A, H2B, H3 and H4). Histone deacetylation gives a tag for epigenetic repression and plays an important role in transcriptional regulation, cell cycle progression and developmental events. Histone deacetylases act via the formation of large multiprotein complexes. Involved in muscle maturation via its interaction with the myocyte enhancer factors such as MEF2A, MEF2C and MEF2D. Deacetylates HSPA1A and HSPA1A at 'Lys-77' leading to their preferential binding to co-chaperone STUB1. The polypeptide is Histone deacetylase 4 (Hdac4) (Mus musculus (Mouse)).